A 552-amino-acid chain; its full sequence is Mothers against decapentaplegic homolog 4 (552 aa).

Residues 1–322 (MDNMSITNTP…PISNHPAPEY (322 aa)) form a mediates interaction with ZBTB7A region. Residues 18-142 (SIVHSLMCHR…YERVVSPGID (125 aa)) enclose the MH1 domain. Lys37 carries the post-translational modification N6-acetyllysine. The interval 44-69 (VKKLKEKKDELDSLITAITTNGAHPS) is required for interaction with TSC22D1. Cys71 provides a ligand contact to Zn(2+). Residue Lys113 forms a Glycyl lysine isopeptide (Lys-Gly) (interchain with G-Cter in SUMO2) linkage. Residues Cys115, Cys127, and His132 each coordinate Zn(2+). Disordered stretches follow at residues 168-194 (GQPS…STET) and 236-256 (GLLQ…FTGQ). Polar residues-rich tracts occupy residues 170–194 (PSLS…STET) and 245–256 (QPGQQQNGFTGQ). The interval 275–320 (PYTPNLPHHQNGHLQHHPPMPPHPGHYWPVHNELAFQPPISNHPAP) is SAD. Residues 323–552 (WCSIAYFEMD…MPIADPQPLD (230 aa)) enclose the MH2 domain. N6-acetyllysine is present on residues Lys428 and Lys507. Residue Lys519 forms a Glycyl lysine isopeptide (Lys-Gly) (interchain with G-Cter in ubiquitin) linkage.

It belongs to the dwarfin/SMAD family. Monomer; in the absence of TGF-beta activation. Heterotrimer; on TGF-beta activation. Heterotrimer composed of two molecules of a C-terminally phosphorylated R-SMAD molecule, SMAD2 or SMAD3, and one molecule of SMAD4 to form the transcriptional active SMAD2/SMAD3-SMAD4 complex. Found in a ternary complex composed of SMAD4, STK11/LKB1 and STK11IP. Found in a complex with SMAD1 and YY1. Identified in a complex that contains at least ZNF451, SMAD2, SMAD3 and SMAD4. Interacts with ATF2, COPS5, DACH1, MSG1, SKI, STK11/LKB1, STK11IP and TRIM33. Associates with ZNF423 or ZNF521 in response to BMP2 leading to activate transcription of BMP target genes. Interacts with USP9X. Interacts (via the MH1 and MH2 domains) with RBPMS. Interacts with WWTR1 (via coiled-coil domain). Interacts with CITED1 and CITED2. Interacts with PDPK1 (via PH domain). Interacts with VPS39; this interaction affects heterodimer formation with SMAD3, but not with SMAD2, and leads to inhibition of SMAD3-dependent transcription activation. Interactions with VPS39 and SMAD2 may be mutually exclusive. Interacts (via MH2 domain) with ZNF451 (via N-terminal zinc-finger domains). Interacts with ZC3H3. Interacts weakly with ZNF8. Interacts with NUP93 and IPO7; translocates SMAD4 to the nucleus through the NPC upon BMP7 stimulation resulting in activation of SMAD4 signaling. Interacts with CREB3L1, the interaction takes place upon TGFB1 induction and SMAD4 acts as a CREB3L1 coactivator to induce the expression of genes involved in the assembly of collagen extracellular matrix. Interacts with DLX1. Interacts with ZBTB7A; the interaction is direct and stimulated by TGFB1. Interacts with CREBBP; the recruitment of this transcriptional coactivator is negatively regulated by ZBTB7A. Interacts with EP300; the interaction with this transcriptional coactivator is negatively regulated by ZBTB7A. Interacts with HDAC1. Interacts (via MH2 domain) with ZMIZ1 (via SP-RING-type domain); in the TGF-beta signaling pathway increases the activity of the SMAD3/SMAD4 transcriptional complex. Interacts (via N-terminus) with TSC22D1. Phosphorylated by PDPK1. In terms of processing, monoubiquitinated on Lys-519 by E3 ubiquitin-protein ligase TRIM33. Monoubiquitination hampers its ability to form a stable complex with activated SMAD2/3 resulting in inhibition of TGF-beta/BMP signaling cascade. Deubiquitination by USP9X restores its competence to mediate TGF-beta signaling.

The protein resides in the cytoplasm. The protein localises to the nucleus. In muscle physiology, plays a central role in the balance between atrophy and hypertrophy. When recruited by MSTN, promotes atrophy response via phosphorylated SMAD2/4. MSTN decrease causes SMAD4 release and subsequent recruitment by the BMP pathway to promote hypertrophy via phosphorylated SMAD1/5/8. Acts synergistically with SMAD1 and YY1 in bone morphogenetic protein (BMP)-mediated cardiac-specific gene expression. Binds to SMAD binding elements (SBEs) (5'-GTCT/AGAC-3') within BMP response element (BMPRE) of cardiac activating regions. Common SMAD (co-SMAD) is the coactivator and mediator of signal transduction by TGF-beta (transforming growth factor). Component of the heterotrimeric SMAD2/SMAD3-SMAD4 complex that forms in the nucleus and is required for the TGF-mediated signaling. Promotes binding of the SMAD2/SMAD4/FAST-1 complex to DNA and provides an activation function required for SMAD1 or SMAD2 to stimulate transcription. Component of the multimeric SMAD3/SMAD4/JUN/FOS complex which forms at the AP1 promoter site; required for synergistic transcriptional activity in response to TGF-beta. May act as a tumor suppressor. Positively regulates PDPK1 kinase activity by stimulating its dissociation from the 14-3-3 protein YWHAQ which acts as a negative regulator. The sequence is that of Mothers against decapentaplegic homolog 4 (SMAD4) from Homo sapiens (Human).